Reading from the N-terminus, the 81-residue chain is Beta-toxin Ct13 (81 aa).

An N-terminal signal peptide occupies residues 1 to 18; the sequence is MKVLILIIASVLLIGVEC. An LCN-type CS-alpha/beta domain is found at 19–78; sequence KDGFPVDSEGCILLPCATRAYCSVNCKFMKGSGGSCDTLACHCKGLPEDAKVQDKPTNKC. 4 cysteine pairs are disulfide-bonded: Cys29–Cys78, Cys34–Cys54, Cys40–Cys59, and Cys44–Cys61. A Cysteine amide modification is found at Cys78.

It belongs to the long (4 C-C) scorpion toxin superfamily. Sodium channel inhibitor family. Beta subfamily. In terms of tissue distribution, expressed by the venom gland.

Its subcellular location is the secreted. Its function is as follows. Beta toxins bind voltage-independently at site-4 of sodium channels (Nav) and shift the voltage of activation toward more negative potentials thereby affecting sodium channel activation and promoting spontaneous and repetitive firing. This Centruroides tecomanus (Scorpion) protein is Beta-toxin Ct13.